A 438-amino-acid chain; its full sequence is Serine hydroxymethyltransferase (438 aa).

Residues L133 and 137–139 (GHL) contribute to the (6S)-5,6,7,8-tetrahydrofolate site. N6-(pyridoxal phosphate)lysine is present on K242.

It belongs to the SHMT family. In terms of assembly, homodimer. Pyridoxal 5'-phosphate serves as cofactor.

It localises to the cytoplasm. It carries out the reaction (6R)-5,10-methylene-5,6,7,8-tetrahydrofolate + glycine + H2O = (6S)-5,6,7,8-tetrahydrofolate + L-serine. The protein operates within one-carbon metabolism; tetrahydrofolate interconversion. It participates in amino-acid biosynthesis; glycine biosynthesis; glycine from L-serine: step 1/1. In terms of biological role, catalyzes the reversible interconversion of serine and glycine with tetrahydrofolate (THF) serving as the one-carbon carrier. This reaction serves as the major source of one-carbon groups required for the biosynthesis of purines, thymidylate, methionine, and other important biomolecules. Also exhibits THF-independent aldolase activity toward beta-hydroxyamino acids, producing glycine and aldehydes, via a retro-aldol mechanism. This Brucella melitensis biotype 2 (strain ATCC 23457) protein is Serine hydroxymethyltransferase.